The following is a 678-amino-acid chain: Glycine--tRNA ligase beta subunit (678 aa).

Belongs to the class-II aminoacyl-tRNA synthetase family. In terms of assembly, tetramer of two alpha and two beta subunits.

It localises to the cytoplasm. The catalysed reaction is tRNA(Gly) + glycine + ATP = glycyl-tRNA(Gly) + AMP + diphosphate. In Streptococcus pneumoniae (strain ATCC BAA-255 / R6), this protein is Glycine--tRNA ligase beta subunit.